The sequence spans 361 residues: 3-dehydroquinate synthase (361 aa).

NAD(+)-binding positions include D69–K74, G103–D107, T127–T128, K140, K149, and T167–T170. Zn(2+) contacts are provided by E182, H245, and H262.

Belongs to the sugar phosphate cyclases superfamily. Dehydroquinate synthase family. Co(2+) is required as a cofactor. It depends on Zn(2+) as a cofactor. Requires NAD(+) as cofactor.

The protein resides in the cytoplasm. It catalyses the reaction 7-phospho-2-dehydro-3-deoxy-D-arabino-heptonate = 3-dehydroquinate + phosphate. Its pathway is metabolic intermediate biosynthesis; chorismate biosynthesis; chorismate from D-erythrose 4-phosphate and phosphoenolpyruvate: step 2/7. Its function is as follows. Catalyzes the conversion of 3-deoxy-D-arabino-heptulosonate 7-phosphate (DAHP) to dehydroquinate (DHQ). This Thioalkalivibrio sulfidiphilus (strain HL-EbGR7) protein is 3-dehydroquinate synthase.